The following is a 162-amino-acid chain: Phosphopantetheine adenylyltransferase (162 aa).

Residue Thr-10 coordinates substrate. Residues 10 to 11 (TF) and His-18 each bind ATP. 3 residues coordinate substrate: Lys-42, Leu-74, and Arg-88. Residues 89–91 (GLR), Glu-99, and 124–130 (NSFISST) each bind ATP.

The protein belongs to the bacterial CoaD family. Homohexamer. It depends on Mg(2+) as a cofactor.

It localises to the cytoplasm. The enzyme catalyses (R)-4'-phosphopantetheine + ATP + H(+) = 3'-dephospho-CoA + diphosphate. The protein operates within cofactor biosynthesis; coenzyme A biosynthesis; CoA from (R)-pantothenate: step 4/5. Its function is as follows. Reversibly transfers an adenylyl group from ATP to 4'-phosphopantetheine, yielding dephospho-CoA (dPCoA) and pyrophosphate. The protein is Phosphopantetheine adenylyltransferase of Alteromonas mediterranea (strain DSM 17117 / CIP 110805 / LMG 28347 / Deep ecotype).